Consider the following 310-residue polypeptide: Alpha/beta hydrolase domain-containing protein 17A (310 aa).

Catalysis depends on charge relay system residues Ser190, Asp255, and His284. A Phosphoserine modification is found at Ser307.

The protein belongs to the AB hydrolase superfamily. ABHD17 family. Post-translationally, palmitoylated on cysteine residues located in a cysteine cluster at the N-terminus which promotes membrane localization. Palmitoylation is required for post-synaptic localization and for depalmitoylating activity towards DLG4/PSD95.

The protein localises to the cell membrane. Its subcellular location is the endosome membrane. The protein resides in the cell projection. It localises to the dendritic spine. It is found in the postsynaptic density membrane. The enzyme catalyses S-hexadecanoyl-L-cysteinyl-[protein] + H2O = L-cysteinyl-[protein] + hexadecanoate + H(+). In terms of biological role, hydrolyzes fatty acids from S-acylated cysteine residues in proteins. Has depalmitoylating activity towards NRAS. Has depalmitoylating activity towards DLG4/PSD95. May have depalmitoylating activity towards MAP6. In Bos taurus (Bovine), this protein is Alpha/beta hydrolase domain-containing protein 17A.